Consider the following 266-residue polypeptide: GTP cyclohydrolase III (266 aa).

It belongs to the archaeal-type GTP cyclohydrolase family.

The enzyme catalyses GTP + 3 H2O = 2-amino-5-formylamino-6-(5-phospho-D-ribosylamino)pyrimidin-4(3H)-one + 2 phosphate + 2 H(+). In terms of biological role, catalyzes the formation of 2-amino-5-formylamino-6-ribofuranosylamino-4(3H)-pyrimidinone ribonucleotide monophosphate and inorganic phosphate from GTP. Also has an independent pyrophosphate phosphohydrolase activity. This Methanococcus maripaludis (strain C5 / ATCC BAA-1333) protein is GTP cyclohydrolase III.